The following is a 357-amino-acid chain: MAARIQQSPQPGGGKRKGKAQYVQAKRARRWDGGGPRQLEPGIQGILITCNMNERKCVEEAYSLLNEYGDDMYGPEKFADKDQQPSGSEGEDDDVEAALKKEVGDIKASTEMRLRRFQSVESGANNVVFIRTLGIEPEKLVHHILQDIYKTKKKKTRVILRMLPISGTCKAFLEDMKKYAETFLEPWFKAPNKGTFQIVYKSRNNSHMNREEVIKELAGIVGSLNSENKVDLSNPQYTVVVEIIKAVCCLSVVKDYMLFRKYNLQEVVKSAKDLSQLNPKQAAQTGNGKEAKLESGDKSSQNDPAEGKNNQQVVPENSEELGPTESISETHVVNEGVAKPELASQVTEGSESNENDL.

Over residues 1–10 (MAARIQQSPQ) the composition is skewed to polar residues. 2 disordered regions span residues 1–38 (MAAR…GPRQ) and 74–95 (GPEK…DDDV). At alanine 2 the chain carries N-acetylalanine. Residues serine 8, serine 86, serine 88, and serine 119 each carry the phosphoserine modification. The 108-residue stretch at 147–254 (DIYKTKKKKT…KAVCCLSVVK (108 aa)) folds into the THUMP domain. Phosphoserine is present on serine 270. Polar residues-rich tracts occupy residues 276–287 (QLNPKQAAQTGN) and 298–315 (KSSQ…QVVP). The disordered stretch occupies residues 276-357 (QLNPKQAAQT…EGSESNENDL (82 aa)).

Belongs to the THUMPD1 family. In terms of assembly, interacts with NAT10. Binds tRNA.

Functionally, functions as a tRNA-binding adapter to mediate NAT10-dependent tRNA acetylation modifying cytidine to N4-acetylcytidine (ac4C). The protein is THUMP domain-containing protein 1 (THUMPD1) of Bos taurus (Bovine).